The primary structure comprises 366 residues: GTP cyclohydrolase 1 type 2 homolog (366 aa).

Residues His64, His65, Asp102, His326, and Glu329 each coordinate a divalent metal cation.

Belongs to the GTP cyclohydrolase I type 2/NIF3 family. Homohexamer.

The protein is GTP cyclohydrolase 1 type 2 homolog of Staphylococcus epidermidis (strain ATCC 35984 / DSM 28319 / BCRC 17069 / CCUG 31568 / BM 3577 / RP62A).